Here is a 177-residue protein sequence, read N- to C-terminus: ATP-dependent protease subunit HslV (177 aa).

The active site involves T2. Residues G157, C160, and T163 each coordinate Na(+).

The protein belongs to the peptidase T1B family. HslV subfamily. As to quaternary structure, a double ring-shaped homohexamer of HslV is capped on each side by a ring-shaped HslU homohexamer. The assembly of the HslU/HslV complex is dependent on binding of ATP.

The protein localises to the cytoplasm. It catalyses the reaction ATP-dependent cleavage of peptide bonds with broad specificity.. Allosterically activated by HslU binding. In terms of biological role, protease subunit of a proteasome-like degradation complex believed to be a general protein degrading machinery. The chain is ATP-dependent protease subunit HslV from Aeromonas salmonicida (strain A449).